The primary structure comprises 492 residues: Protein nucleotidyltransferase YdiU (492 aa).

ATP-binding residues include G88, G90, R91, K111, D123, G124, R174, and R181. The active-site Proton acceptor is D250. Residues N251 and D260 each coordinate Mg(2+). Residue D260 participates in ATP binding.

It belongs to the SELO family. The cofactor is Mg(2+). Mn(2+) is required as a cofactor.

The enzyme catalyses L-seryl-[protein] + ATP = 3-O-(5'-adenylyl)-L-seryl-[protein] + diphosphate. The catalysed reaction is L-threonyl-[protein] + ATP = 3-O-(5'-adenylyl)-L-threonyl-[protein] + diphosphate. It carries out the reaction L-tyrosyl-[protein] + ATP = O-(5'-adenylyl)-L-tyrosyl-[protein] + diphosphate. It catalyses the reaction L-histidyl-[protein] + UTP = N(tele)-(5'-uridylyl)-L-histidyl-[protein] + diphosphate. The enzyme catalyses L-seryl-[protein] + UTP = O-(5'-uridylyl)-L-seryl-[protein] + diphosphate. The catalysed reaction is L-tyrosyl-[protein] + UTP = O-(5'-uridylyl)-L-tyrosyl-[protein] + diphosphate. Nucleotidyltransferase involved in the post-translational modification of proteins. It can catalyze the addition of adenosine monophosphate (AMP) or uridine monophosphate (UMP) to a protein, resulting in modifications known as AMPylation and UMPylation. This is Protein nucleotidyltransferase YdiU from Rhodopseudomonas palustris (strain BisB5).